A 130-amino-acid polypeptide reads, in one-letter code: Small ribosomal subunit protein uS9 (130 aa).

The segment at 109–130 (RKKERKKYGQPGARAKFQYSKR) is disordered.

It belongs to the universal ribosomal protein uS9 family.

The protein is Small ribosomal subunit protein uS9 of Maridesulfovibrio salexigens (strain ATCC 14822 / DSM 2638 / NCIMB 8403 / VKM B-1763) (Desulfovibrio salexigens).